Here is a 152-residue protein sequence, read N- to C-terminus: MTITDLVLILFIAALLAYALYDQFIMPRRNGPTLLSIALLRRGRVDSVIFVGLVAILIYNNVTSHGAQMTTWLLSALALMGFYIFWIRTPRIIFKQRGFFFANVWIEYNRIKEMNLSEDGVLVMQLEQRRLLIRVRNIDDLEKIYKLLIENQ.

3 consecutive transmembrane segments (helical) span residues 6–26, 45–65, and 67–87; these read LVLI…QFIM, VDSV…VTSH, and AQMT…IFWI.

It belongs to the UPF0266 family.

The protein localises to the cell inner membrane. This is UPF0266 membrane protein YobD from Salmonella choleraesuis (strain SC-B67).